Here is a 453-residue protein sequence, read N- to C-terminus: G-protein coupled receptor 39 (453 aa).

Over 1-34 the chain is Extracellular; the sequence is MASPSLPGSDCSQIIDHSHVPEFEVATWIKITLI. Cystine bridges form between Cys-11/Cys-191 and Cys-108/Cys-210. His-17 and His-19 together coordinate Zn(2+). A helical membrane pass occupies residues 35–55; the sequence is LVYLIIFVMGLLGNSATIRVT. Residues 56–69 are Cytoplasmic-facing; sequence QVLQKKGYLQKEVT. A helical transmembrane segment spans residues 70–89; that stretch reads DHMVSLACSDILVFLIGMPM. The Extracellular segment spans residues 90-109; that stretch reads EFYSIIWNPLTTSSYTLSCK. Residues 110-131 traverse the membrane as a helical segment; the sequence is LHTFLFEACSYATLLHVLTLSF. Residues 132–151 are Cytoplasmic-facing; sequence ERYIAICHPFRYKAVSGPCQ. The chain crosses the membrane as a helical span at residues 152 to 172; that stretch reads VKLLIGFVWVTSALVALPLLF. At 173–217 the chain is on the extracellular side; sequence AMGTEYPLVNVPSHRGLTCNRSSTRHHEQPETSNMSICTNLSSRW. Asn-192, Asn-206, and Asn-212 each carry an N-linked (GlcNAc...) asparagine glycan. Residues 218-242 traverse the membrane as a helical segment; sequence TVFQSSIFGAFVVYLVVLLSVAFMC. Topologically, residues 243–283 are cytoplasmic; sequence WNMMQVLMKSQKGSLAGGTRPPQLRKSESEESRTARRQTII. A disordered region spans residues 255–274; the sequence is GSLAGGTRPPQLRKSESEES. The helical transmembrane segment at 284 to 305 threads the bilayer; sequence FLRLIVVTLAVCWMPNQIRRIM. The Extracellular portion of the chain corresponds to 306–323; sequence AAAKPKHDWTRSYFRAYM. Residues 324–344 form a helical membrane-spanning segment; the sequence is ILLPFSETFFYLSSVINPLLY. The Cytoplasmic portion of the chain corresponds to 345-453; the sequence is TVSSQQFRRV…AENGFQEHEV (109 aa). Ser-396 carries the post-translational modification Phosphoserine. The segment at 415-453 is disordered; that stretch reads SEAEPQSKSQSLSLESLEPNSGAKPANSAAENGFQEHEV. Residues 418-435 show a composition bias toward low complexity; it reads EPQSKSQSLSLESLEPNS.

It belongs to the G-protein coupled receptor 1 family. As to quaternary structure, interacts with HTR1A. Interacts with GALR1. In terms of tissue distribution, expressed in many tissues, including the stomach, intestine and hypothalamus.

The protein resides in the cell membrane. In terms of biological role, zinc-sensing receptor that can sense changes in extracellular Zn(2+), mediate Zn(2+) signal transmission, and participates in the regulation of numerous physiological processes including glucose homeostasis regulation, gastrointestinal mobility, hormone secretion and cell death. Activation by Zn(2+) in keratinocytes increases the intracellular concentration of Ca(2+) and activates the ERK/MAPK and PI3K/AKT signaling pathways leading to epithelial repair. Plays an essential role in normal wound healing by inducing the production of cytokines including the major inflammatory cytokine IL6 via the PKC/MAPK/CEBPB pathway. Regulates adipose tissue metabolism, especially lipolysis, and regulates the function of lipases, such as hormone-sensitive lipase and adipose triglyceride lipase. Plays a role in the inhibition of cell death and protects against oxidative, endoplasmic reticulum and mitochondrial stress by inducing secretion of the cytoprotective pigment epithelium-derived growth factor (PEDF) and probably other protective transcripts in a GNA13/RHOA/SRE-dependent manner. Forms dynamic heteroreceptor complexes with HTR1A and GALR1 depending on cell type or specific physiological states, resulting in signaling diversity: HTR1A-GPR39 shows additive increase in signaling along the serum response element (SRE) and NF-kappa-B pathways while GALR1 acts as an antagonist blocking SRE. The sequence is that of G-protein coupled receptor 39 (GPR39) from Homo sapiens (Human).